The sequence spans 414 residues: Histidine--tRNA ligase (414 aa).

Belongs to the class-II aminoacyl-tRNA synthetase family. As to quaternary structure, homodimer.

Its subcellular location is the cytoplasm. The catalysed reaction is tRNA(His) + L-histidine + ATP = L-histidyl-tRNA(His) + AMP + diphosphate + H(+). In Mycoplasma mycoides subsp. mycoides SC (strain CCUG 32753 / NCTC 10114 / PG1), this protein is Histidine--tRNA ligase.